Here is a 164-residue protein sequence, read N- to C-terminus: Large ribosomal subunit protein uL11 (164 aa).

Belongs to the universal ribosomal protein uL11 family. As to quaternary structure, part of the ribosomal stalk of the 50S ribosomal subunit. Interacts with L10 and the large rRNA to form the base of the stalk. L10 forms an elongated spine to which L12 dimers bind in a sequential fashion forming a multimeric L10(L12)X complex.

Its function is as follows. Forms part of the ribosomal stalk which helps the ribosome interact with GTP-bound translation factors. The polypeptide is Large ribosomal subunit protein uL11 (Pyrococcus horikoshii (strain ATCC 700860 / DSM 12428 / JCM 9974 / NBRC 100139 / OT-3)).